We begin with the raw amino-acid sequence, 700 residues long: Inhibitor of carbonic anhydrase (700 aa).

The N-terminal stretch at 1–19 (MRLLICALLCLGTLGLCLA) is a signal peptide. 2 consecutive Transferrin-like domains span residues 25 to 347 (IRWC…NLKR) and 355 to 685 (VKWC…NFRQ). 16 disulfide bridges follow: cysteine 28–cysteine 67, cysteine 38–cysteine 58, cysteine 137–cysteine 213, cysteine 172–cysteine 188, cysteine 175–cysteine 198, cysteine 185–cysteine 196, cysteine 246–cysteine 260, cysteine 358–cysteine 390, cysteine 368–cysteine 381, cysteine 415–cysteine 695, cysteine 438–cysteine 658, cysteine 470–cysteine 545, cysteine 494–cysteine 686, cysteine 504–cysteine 518, cysteine 515–cysteine 528, and cysteine 585–cysteine 599. Residue asparagine 664 is glycosylated (N-linked (GlcNAc...) asparagine).

It belongs to the transferrin family. As to quaternary structure, monomer. Interacts (via transferrin-like domain 2) with CA2. In terms of processing, N-glycosylated. As to expression, detected in blood plasma, heart, kidney, liver, colon, lung, spleen, pancreas and testis (at protein level).

The protein resides in the secreted. Inhibitor for carbonic anhydrase 2 (CA2). Does not bind iron ions. This Mus musculus (Mouse) protein is Inhibitor of carbonic anhydrase.